Here is a 382-residue protein sequence, read N- to C-terminus: Protein delta homolog 2 (382 aa).

The N-terminal stretch at 1–26 is a signal peptide; it reads MPSGCRCLNLVCLLCILGATSQPARA. EGF-like domains lie at 27–58, 62–89, 91–129, and 131–172; these read DDCS…LHCE, RMPG…KFCD, DEHI…RGCE, and KAGP…AHCE. The Extracellular portion of the chain corresponds to 27 to 305; that stretch reads DDCSSHCDLA…RQESGLGESS (279 aa). 17 disulfides stabilise this stretch: Cys29–Cys40, Cys33–Cys46, Cys48–Cys57, Cys66–Cys71, Cys79–Cys88, Cys95–Cys107, Cys101–Cys117, Cys119–Cys128, Cys135–Cys148, Cys142–Cys160, Cys162–Cys171, Cys178–Cys189, Cys183–Cys198, Cys200–Cys209, Cys216–Cys227, Cys221–Cys236, and Cys238–Cys247. An N-linked (GlcNAc...) asparagine glycan is attached at Asn157. Residues 174–210 enclose the EGF-like 5; calcium-binding domain; that stretch reads NVDDCLMRPCANGATCIDGINRFSCLCPEGFAGRFCT. The 37-residue stretch at 212-248 folds into the EGF-like 6; calcium-binding domain; that stretch reads NLDDCASRPCQRGARCRDRVHDFDCLCPSGYGGKTCE. A helical transmembrane segment spans residues 306–326; sequence LVALVVFGSLTAALVLATVLL. At 327–382 the chain is on the cytoplasmic side; it reads TLRAWRRGICPTGPCCYPAPHYAPARQDQECQVSMLPAGFPLSPDLPPEPGKTTAL.

In terms of tissue distribution, detected in a number of tissues including lung, brain, adrenal gland, testis, adult liver, placenta, ovary and thymus. Not detected in fetal liver or in adult spleen, muscle and heart.

The protein localises to the membrane. In terms of biological role, regulates adipogenesis. This is Protein delta homolog 2 (Dlk2) from Mus musculus (Mouse).